A 121-amino-acid polypeptide reads, in one-letter code: MRRQEALAGTASEAGREGEQPRPAGLGCRTRAEPGGPQESRQQWKTFLYCEPHKRIKEVLEEELSIKRDECHVKSPPTVALDGIWSIRRNLPVGGTISGQQSRNSSLPQAKYYSRHGGLRR.

2 disordered regions span residues 1–41 (MRRQ…QESR) and 94–121 (GGTI…GLRR). The segment covering 98 to 108 (SGQQSRNSSLP) has biased composition (polar residues).

As to expression, predominantly expressed in tissues containing motile cilia. Also expressed in non-motile ciliated adult olfactory bulbs.

Its subcellular location is the cytoplasm. The protein resides in the cytoskeleton. It localises to the cilium basal body. This is an uncharacterized protein from Mus musculus (Mouse).